We begin with the raw amino-acid sequence, 664 residues long: Intraflagellar transport protein 70B (664 aa).

TPR repeat units follow at residues 11–44 (DGEF…SPRS), 45–78 (RAGL…HPEL), 153–186 (LDGQ…SGYR), 188–220 (DLSY…GIRQ), 385–418 (LTEQ…YEDT), 423–456 (IPVL…CNDH), and 458–491 (VWKL…HYDN). Residues 509–532 (MISQNEEAEELMRKIGKEEEQLSY) are a coiled coil. Residues 543–576 (CIVNLVIGTLYCAKGNYDFGISRVIKSLEPCNKK) form a TPR 8 repeat.

This sequence belongs to the TTC30/dfy-1/fleer family. Interacts with the IFT B complex components IFT27, IFT46, IFT74, IFT52, IFT57, IFT80, IFT81 and IFT88. Interacts with KIF17.

It is found in the cell projection. It localises to the cilium. In terms of biological role, required for polyglutamylation of axonemal tubulin. Plays a role in anterograde intraflagellar transport (IFT), the process by which cilia precursors are transported from the base of the cilium to the site of their incorporation at the tip. The chain is Intraflagellar transport protein 70B (IFT70B) from Bos taurus (Bovine).